A 511-amino-acid chain; its full sequence is V-type proton ATPase subunit B, brain isoform (511 aa).

Residue arginine 400 participates in ATP binding.

This sequence belongs to the ATPase alpha/beta chains family. V-ATPase is a heteromultimeric enzyme made up of two complexes: the ATP-hydrolytic V1 complex and the proton translocation V0 complex. The V1 complex consists of three catalytic AB heterodimers that form a heterohexamer, three peripheral stalks each consisting of EG heterodimers, one central rotor including subunits D and F, and the regulatory subunits C and H. The proton translocation complex V0 consists of the proton transport subunit a, a ring of proteolipid subunits c9c'', rotary subunit d, subunits e and f, and the accessory subunits ATP6AP1/Ac45 and ATP6AP2/PRR. Kidney; found in early distal nephron, encompassing thick ascending limbs and distal convoluted tubules and in the alpha-intercalated cells of the cortical collecting ducts (at protein level). Expressed in epididymal clear cells (at protein level). Mainly expressed in the organ of Corti and spiral ganglion neurons, in both the early postnatal cochlea (P2) and the adult cochlea (P30).

The protein localises to the apical cell membrane. It localises to the melanosome. Its subcellular location is the cytoplasm. The protein resides in the cytoplasmic vesicle. It is found in the secretory vesicle. The protein localises to the synaptic vesicle membrane. It localises to the clathrin-coated vesicle membrane. Functionally, non-catalytic subunit of the V1 complex of vacuolar(H+)-ATPase (V-ATPase), a multisubunit enzyme composed of a peripheral complex (V1) that hydrolyzes ATP and a membrane integral complex (V0) that translocates protons. V-ATPase is responsible for acidifying and maintaining the pH of intracellular compartments and in some cell types, is targeted to the plasma membrane, where it is responsible for acidifying the extracellular environment. In renal intercalated cells, can partially compensate the lack of ATP6V1B1 and mediate secretion of protons (H+) into the urine under base-line conditions but not in conditions of acid load. The sequence is that of V-type proton ATPase subunit B, brain isoform (Atp6v1b2) from Mus musculus (Mouse).